The primary structure comprises 318 residues: Transaldolase (318 aa).

Residue Lys-132 is the Schiff-base intermediate with substrate of the active site.

The protein belongs to the transaldolase family. Type 1 subfamily. In terms of assembly, homodimer.

It localises to the cytoplasm. The enzyme catalyses D-sedoheptulose 7-phosphate + D-glyceraldehyde 3-phosphate = D-erythrose 4-phosphate + beta-D-fructose 6-phosphate. Its pathway is carbohydrate degradation; pentose phosphate pathway; D-glyceraldehyde 3-phosphate and beta-D-fructose 6-phosphate from D-ribose 5-phosphate and D-xylulose 5-phosphate (non-oxidative stage): step 2/3. Transaldolase is important for the balance of metabolites in the pentose-phosphate pathway. The polypeptide is Transaldolase (Shewanella sediminis (strain HAW-EB3)).